A 434-amino-acid polypeptide reads, in one-letter code: Asparagine--tRNA ligase (434 aa).

The protein belongs to the class-II aminoacyl-tRNA synthetase family.

It localises to the cytoplasm. It carries out the reaction tRNA(Asn) + L-asparagine + ATP = L-asparaginyl-tRNA(Asn) + AMP + diphosphate + H(+). This Pyrococcus abyssi (strain GE5 / Orsay) protein is Asparagine--tRNA ligase.